Here is a 305-residue protein sequence, read N- to C-terminus: Methionyl-tRNA formyltransferase (305 aa).

111 to 114 (SLLP) is a (6S)-5,6,7,8-tetrahydrofolate binding site.

The protein belongs to the Fmt family.

It carries out the reaction L-methionyl-tRNA(fMet) + (6R)-10-formyltetrahydrofolate = N-formyl-L-methionyl-tRNA(fMet) + (6S)-5,6,7,8-tetrahydrofolate + H(+). Its function is as follows. Attaches a formyl group to the free amino group of methionyl-tRNA(fMet). The formyl group appears to play a dual role in the initiator identity of N-formylmethionyl-tRNA by promoting its recognition by IF2 and preventing the misappropriation of this tRNA by the elongation apparatus. In Helicobacter pylori (strain HPAG1), this protein is Methionyl-tRNA formyltransferase.